Here is a 462-residue protein sequence, read N- to C-terminus: 3-ketoacyl-CoA thiolase 2, peroxisomal (462 aa).

A peroxisome-targeting transit peptide spans 1 to 34 (MEKAIERQRVLLEHLRPSSSSSHNYEASLSASAC). C138 serves as the catalytic Acyl-thioester intermediate. C138 and C192 form a disulfide bridge. Active-site proton acceptor residues include H393 and C425.

Belongs to the thiolase-like superfamily. Thiolase family. As to quaternary structure, forms homodimers. Accumulates in etiolated cotyledons and in seedlings, also present in roots, flowers and siliques (at protein level). High levels in wounded leaves.

The protein resides in the peroxisome. It is found in the glyoxysome. It catalyses the reaction an acyl-CoA + acetyl-CoA = a 3-oxoacyl-CoA + CoA. It participates in lipid metabolism; fatty acid metabolism. Its function is as follows. Involved in long chain fatty-acid beta-oxidation prior to gluconeogenesis during germination and subsequent seedling growth. Confers sensitivity to 2,4-dichlorophenoxybutiric acid (2,4-DB). Required for local and systemic induction of jasmonic acid (JA) biosynthesis after wounding. Seems to be involved in JA biosynthesis during senescence. May be involved in the positive regulation of abscisic acid-activated signaling pathway. This chain is 3-ketoacyl-CoA thiolase 2, peroxisomal (PED1), found in Arabidopsis thaliana (Mouse-ear cress).